The following is a 158-amino-acid chain: MMQKLLKCSRLVLALALILVLESSVQGYPTRRARYQWVRCNPDSNSANCLEEKGPMFELLPGESNKIPRLRTDLFPKTRIQDLNRIFPLSEDYSGSGFGSGSGSGSGSGSGFLTEMEQDYQLVDESDAFHDNLRSLDRNLPSDSQDLGQHGLEEDFML.

The first 27 residues, 1–27 (MMQKLLKCSRLVLALALILVLESSVQG), serve as a signal peptide directing secretion. Cys-40 and Cys-49 are joined by a disulfide. Residues Ser-94 and Ser-96 are each glycosylated (O-linked (Xyl...) (glycosaminoglycan) serine). 9 tandem repeats follow at residues 94-95 (SG), 96-97 (SG), 98-99 (FG), 100-101 (SG), 102-103 (SG), 104-105 (SG), 106-107 (SG), 108-109 (SG), and 110-111 (SG). Residues 94-111 (SGSGFGSGSGSGSGSGSG) form a 9 X 2 AA tandem repeats of [SF]-G region. Ser-100, Ser-102, Ser-104, Ser-106, Ser-108, and Ser-110 each carry an O-linked (Xyl...) (glycosaminoglycan) serine glycan. The segment at 134–158 (RSLDRNLPSDSQDLGQHGLEEDFML) is disordered.

Belongs to the serglycin family. Binds to activated CD44 and to GZMB. Post-translationally, O-glycosylated; contains chondroitin sulfate and heparan sulfate.

The protein localises to the cytoplasmic granule. It localises to the cytolytic granule. The protein resides in the secreted. It is found in the extracellular space. Its subcellular location is the golgi apparatus. Its function is as follows. Plays a role in formation of mast cell secretory granules and mediates storage of various compounds in secretory vesicles. Required for storage of some proteases in both connective tissue and mucosal mast cells and for storage of granzyme B in T-lymphocytes. Plays a role in localizing neutrophil elastase in azurophil granules of neutrophils. Mediates processing of MMP2. Plays a role in cytotoxic cell granule-mediated apoptosis by forming a complex with granzyme B which is delivered to cells by perforin to induce apoptosis. Regulates the secretion of TNF-alpha and may also regulate protease secretion. Inhibits bone mineralization. The chain is Serglycin (SRGN) from Homo sapiens (Human).